A 959-amino-acid polypeptide reads, in one-letter code: AP2-associated protein kinase 1 (959 aa).

Met1 carries the post-translational modification N-acetylmethionine. Residues Met1–Gln11 show a composition bias toward basic and acidic residues. Residues Met1–Ser27 form a disordered region. Ser14 bears the Phosphoserine mark. A compositionally biased stretch (gly residues) spans Ser14–Ser27. Positions Val46–Leu315 constitute a Protein kinase domain. Residues Leu52 to Val60 and Lys74 contribute to the ATP site. Catalysis depends on Asp176, which acts as the Proton acceptor. Tyr234 is subject to Phosphotyrosine. Ser235 carries the phosphoserine modification. Residues Ser340–Gln385 form a disordered region. 2 positions are modified to phosphothreonine: Thr354 and Thr389. Residue Arg391 is modified to Omega-N-methylarginine. Disordered stretches follow at residues Pro398–Pro514 and Thr578–His630. Positions Gly404–Lys419 are enriched in polar residues. Residues Ala420 to Gln435 are compositionally biased toward low complexity. Thr441 carries the phosphothreonine modification. Composition is skewed to low complexity over residues Gln444–Gln481, Gln494–Gln510, and Thr578–Thr603. The residue at position 604 (Thr604) is a Phosphothreonine. Positions Ile609–Thr625 are enriched in polar residues. Ser616 carries the post-translational modification Phosphoserine. The residue at position 618 (Thr618) is a Phosphothreonine. Phosphoserine occurs at positions 621, 622, 635, and 648. Thr651 carries the post-translational modification Phosphothreonine. Disordered stretches follow at residues Ser662–Asp699, Gly727–Ala763, Pro837–Leu857, and Ile923–Leu943. A compositionally biased stretch (polar residues) spans Thr670–Asn694. At Ser729 the chain carries Phosphoserine. Polar residues-rich tracts occupy residues Gln738–Ala752 and Leu842–Leu857. The tract at residues Asp821–Asp958 is clathrin-binding domain (CBD). 3 positions are modified to phosphoserine: Ser844, Ser935, and Ser936. The span at Gly929 to Ser942 shows a compositional bias: low complexity.

It belongs to the protein kinase superfamily. Ser/Thr protein kinase family. In terms of assembly, interacts (via CBD domain) with clathrin. Interacts with AP-2 complex. Interacts with NUMB. Interacts with alpha-adaptin. Interacts with EPS15 isoform 2. Interacts with membrane-bound activated NOTCH1 but not with the inactive full-length form of NOTCH1. Preferentially interacts with monoubiquitinated activated NOTCH1 compared to the non-ubiquitinated form. Autophosphorylated.

It is found in the cell membrane. It localises to the membrane. The protein localises to the clathrin-coated pit. Its subcellular location is the presynapse. It carries out the reaction L-seryl-[protein] + ATP = O-phospho-L-seryl-[protein] + ADP + H(+). The catalysed reaction is L-threonyl-[protein] + ATP = O-phospho-L-threonyl-[protein] + ADP + H(+). With respect to regulation, stimulated by clathrin. Functionally, regulates clathrin-mediated endocytosis by phosphorylating the AP2M1/mu2 subunit of the adaptor protein complex 2 (AP-2) which ensures high affinity binding of AP-2 to cargo membrane proteins during the initial stages of endocytosis. Preferentially, may phosphorylate substrates on threonine residues. Regulates phosphorylation of other AP-2 subunits as well as AP-2 localization and AP-2-mediated internalization of ligand complexes. Phosphorylates NUMB and regulates its cellular localization, promoting NUMB localization to endosomes. Binds to and stabilizes the activated form of NOTCH1, increases its localization in endosomes and regulates its transcriptional activity. The sequence is that of AP2-associated protein kinase 1 (Aak1) from Mus musculus (Mouse).